A 292-amino-acid chain; its full sequence is Glutamate racemase (292 aa).

Residues Asp-28–Ser-29 and Tyr-60–Gly-61 contribute to the substrate site. Catalysis depends on Cys-91, which acts as the Proton donor/acceptor. Asn-92–Thr-93 provides a ligand contact to substrate. Cys-200 functions as the Proton donor/acceptor in the catalytic mechanism. Thr-201–His-202 lines the substrate pocket.

This sequence belongs to the aspartate/glutamate racemases family.

It carries out the reaction L-glutamate = D-glutamate. It functions in the pathway cell wall biogenesis; peptidoglycan biosynthesis. In terms of biological role, provides the (R)-glutamate required for cell wall biosynthesis. This chain is Glutamate racemase, found in Trichormus variabilis (strain ATCC 29413 / PCC 7937) (Anabaena variabilis).